The primary structure comprises 597 residues: Probable translation initiation factor IF-2 (597 aa).

The tr-type G domain occupies 13–229 (LRTPIVCVMG…LLGLAQKFLE (217 aa)). The interval 22 to 29 (GHVDHGKT) is G1. 22-29 (GHVDHGKT) contributes to the GTP binding site. A G2 region spans residues 47 to 51 (AITQH). Residues 84–87 (DTPG) form a G3 region. GTP-binding positions include 84-88 (DTPGH) and 138-141 (NKID). Positions 138–141 (NKID) are G4. The interval 206–208 (SAV) is G5.

This sequence belongs to the TRAFAC class translation factor GTPase superfamily. Classic translation factor GTPase family. IF-2 subfamily.

Its function is as follows. Function in general translation initiation by promoting the binding of the formylmethionine-tRNA to ribosomes. Seems to function along with eIF-2. This is Probable translation initiation factor IF-2 from Methanosarcina acetivorans (strain ATCC 35395 / DSM 2834 / JCM 12185 / C2A).